Reading from the N-terminus, the 105-residue chain is Large ribosomal subunit protein uL24 (105 aa).

Belongs to the universal ribosomal protein uL24 family. As to quaternary structure, part of the 50S ribosomal subunit.

Functionally, one of two assembly initiator proteins, it binds directly to the 5'-end of the 23S rRNA, where it nucleates assembly of the 50S subunit. Its function is as follows. One of the proteins that surrounds the polypeptide exit tunnel on the outside of the subunit. In Parvibaculum lavamentivorans (strain DS-1 / DSM 13023 / NCIMB 13966), this protein is Large ribosomal subunit protein uL24.